The primary structure comprises 513 residues: ATP synthase subunit alpha (513 aa).

169-176 (GDRQTGKS) contributes to the ATP binding site.

It belongs to the ATPase alpha/beta chains family. F-type ATPases have 2 components, CF(1) - the catalytic core - and CF(0) - the membrane proton channel. CF(1) has five subunits: alpha(3), beta(3), gamma(1), delta(1), epsilon(1). CF(0) has three main subunits: a(1), b(2) and c(9-12). The alpha and beta chains form an alternating ring which encloses part of the gamma chain. CF(1) is attached to CF(0) by a central stalk formed by the gamma and epsilon chains, while a peripheral stalk is formed by the delta and b chains.

It is found in the cell membrane. The catalysed reaction is ATP + H2O + 4 H(+)(in) = ADP + phosphate + 5 H(+)(out). Produces ATP from ADP in the presence of a proton gradient across the membrane. The alpha chain is a regulatory subunit. This Baumannia cicadellinicola subsp. Homalodisca coagulata protein is ATP synthase subunit alpha.